Here is a 937-residue protein sequence, read N- to C-terminus: Protein translocase subunit SecA (937 aa).

ATP is bound by residues glutamine 87, 105-109 (GEGKT), and aspartate 494. The tract at residues 881-937 (RGLNYIGPDEGGRASVHSDAEEYGGGTPAAAGTRRERREAARAEGKGKRGPKSRRKH) is disordered. Basic and acidic residues-rich tracts occupy residues 890–900 (EGGRASVHSDA) and 913–927 (TRRE…EGKG). Over residues 928 to 937 (KRGPKSRRKH) the composition is skewed to basic residues.

The protein belongs to the SecA family. In terms of assembly, monomer and homodimer. Part of the essential Sec protein translocation apparatus which comprises SecA, SecYEG and auxiliary proteins SecDF. Other proteins may also be involved.

The protein localises to the cell membrane. It localises to the cytoplasm. The catalysed reaction is ATP + H2O + cellular proteinSide 1 = ADP + phosphate + cellular proteinSide 2.. Its function is as follows. Part of the Sec protein translocase complex. Interacts with the SecYEG preprotein conducting channel. Has a central role in coupling the hydrolysis of ATP to the transfer of proteins into and across the cell membrane, serving as an ATP-driven molecular motor driving the stepwise translocation of polypeptide chains across the membrane. This Nocardia farcinica (strain IFM 10152) protein is Protein translocase subunit SecA.